The sequence spans 312 residues: MEGEGSRVVALYDGNGAITETKKSPFSVKVGLAQMLRGGVIMDVVNADQARIAEEAGACAVMALERVPADIRAQGGVARMSDPQLIKEIKRAVTIPVMAKARIGHFVEAQILEAIGIDYVDESEVLTLADDANHINKHNFRIPFVCGCRNLGEALRRIREGAAMIRTKGEAGTGNIIEAVRHVRSVMSDIRVLRNMDDDEVFTFAKSIAAPYDLVMQTKQLGRLPVVHFAAGGVATPADAALMMQLGCDGVFVGSGVFKSGDPAKRARAIVQAVTHYSDPEILAEVSCGLGEAMVGINLSDTNVERFANRSE.

Position 43 (aspartate 43) interacts with D-ribose 5-phosphate. Catalysis depends on lysine 100, which acts as the Schiff-base intermediate with D-ribose 5-phosphate. Glycine 172 provides a ligand contact to D-ribose 5-phosphate. Arginine 184 is a binding site for D-glyceraldehyde 3-phosphate. Residues glycine 233 and 254 to 255 contribute to the D-ribose 5-phosphate site; that span reads GS.

It belongs to the PdxS/SNZ family.

It catalyses the reaction aldehydo-D-ribose 5-phosphate + D-glyceraldehyde 3-phosphate + L-glutamine = pyridoxal 5'-phosphate + L-glutamate + phosphate + 3 H2O + H(+). It functions in the pathway cofactor biosynthesis; pyridoxal 5'-phosphate biosynthesis. Its function is as follows. Catalyzes the formation of pyridoxal 5'-phosphate from ribose 5-phosphate (RBP), glyceraldehyde 3-phosphate (G3P) and ammonia. The ammonia is provided by PDX2. Can also use ribulose 5-phosphate and dihydroxyacetone phosphate as substrates, resulting from enzyme-catalyzed isomerization of RBP and G3P, respectively. Also plays an indirect role in resistance to singlet oxygen-generating photosensitizers. The sequence is that of Pyridoxal 5'-phosphate synthase subunit PDX1 (PDX1) from Phaseolus vulgaris (Kidney bean).